The sequence spans 145 residues: I-leader protein (145 aa).

It belongs to the adenoviridae leader protein family.

It is found in the host cytoplasm. The protein resides in the host perinuclear region. In Human adenovirus C serotype 5 (HAdV-5), this protein is I-leader protein.